A 212-amino-acid polypeptide reads, in one-letter code: Holliday junction branch migration complex subunit RuvA (212 aa).

Positions 1–63 are domain I; the sequence is MIAKLKGLID…EDAISLFGFL (63 aa). The domain II stretch occupies residues 64 to 142; that stretch reads ETGERDWFRL…KIALGGFSPG (79 aa). Residues 143–155 form a flexible linker region; the sequence is GIKDALSASAPLP. Residues 156–212 are domain III; that stretch reads AASGRMEDAVSALVNLGYKRLEAFQAVGETARELGDEADSSALIRAALKHLGKGLLG.

It belongs to the RuvA family. As to quaternary structure, homotetramer. Forms an RuvA(8)-RuvB(12)-Holliday junction (HJ) complex. HJ DNA is sandwiched between 2 RuvA tetramers; dsDNA enters through RuvA and exits via RuvB. An RuvB hexamer assembles on each DNA strand where it exits the tetramer. Each RuvB hexamer is contacted by two RuvA subunits (via domain III) on 2 adjacent RuvB subunits; this complex drives branch migration. In the full resolvosome a probable DNA-RuvA(4)-RuvB(12)-RuvC(2) complex forms which resolves the HJ.

Its subcellular location is the cytoplasm. The RuvA-RuvB-RuvC complex processes Holliday junction (HJ) DNA during genetic recombination and DNA repair, while the RuvA-RuvB complex plays an important role in the rescue of blocked DNA replication forks via replication fork reversal (RFR). RuvA specifically binds to HJ cruciform DNA, conferring on it an open structure. The RuvB hexamer acts as an ATP-dependent pump, pulling dsDNA into and through the RuvAB complex. HJ branch migration allows RuvC to scan DNA until it finds its consensus sequence, where it cleaves and resolves the cruciform DNA. The chain is Holliday junction branch migration complex subunit RuvA from Paramagnetospirillum magneticum (strain ATCC 700264 / AMB-1) (Magnetospirillum magneticum).